We begin with the raw amino-acid sequence, 115 residues long: MNFMLTLLTNTLLALLLVTIAFWLPQTNVYSEKSSPYECGFDPMGSARLPFSMKFFLVAITFLLFDLEIALLLPLPWASQANNLEVMLTTALLLISLLAISLAYEWSQKGLEWTE.

3 helical membrane passes run 3 to 23 (FMLT…IAFW), 55 to 75 (FFLV…LLPL), and 84 to 104 (LEVM…SLAY).

Belongs to the complex I subunit 3 family. In terms of assembly, core subunit of respiratory chain NADH dehydrogenase (Complex I) which is composed of 45 different subunits. Interacts with TMEM186. Interacts with TMEM242.

It localises to the mitochondrion inner membrane. The enzyme catalyses a ubiquinone + NADH + 5 H(+)(in) = a ubiquinol + NAD(+) + 4 H(+)(out). Core subunit of the mitochondrial membrane respiratory chain NADH dehydrogenase (Complex I) which catalyzes electron transfer from NADH through the respiratory chain, using ubiquinone as an electron acceptor. Essential for the catalytic activity of complex I. This is NADH-ubiquinone oxidoreductase chain 3 from Rhinolophus pumilus (Horseshoe bat).